The chain runs to 295 residues: NAD kinase (295 aa).

The active-site Proton acceptor is the aspartate 73. Residues 73–74 (DG), arginine 78, 146–147 (NE), lysine 157, arginine 174, aspartate 176, and 187–192 (TAYSLS) contribute to the NAD(+) site.

It belongs to the NAD kinase family. A divalent metal cation serves as cofactor.

The protein resides in the cytoplasm. The enzyme catalyses NAD(+) + ATP = ADP + NADP(+) + H(+). Its function is as follows. Involved in the regulation of the intracellular balance of NAD and NADP, and is a key enzyme in the biosynthesis of NADP. Catalyzes specifically the phosphorylation on 2'-hydroxyl of the adenosine moiety of NAD to yield NADP. The protein is NAD kinase of Wigglesworthia glossinidia brevipalpis.